The following is a 408-amino-acid chain: Lysosome-associated membrane glycoprotein 3 (408 aa).

An N-terminal signal peptide occupies residues 1-20; it reads MPGQTSAVAVLLCLAVILHG. The Lumenal segment spans residues 21–373; it reads YQIREKEFPE…IVDECLSDYT (353 aa). N-linked (GlcNAc...) asparagine glycans are attached at residues asparagine 55 and asparagine 225. Residues cysteine 230 and cysteine 267 are joined by a disulfide bond. Residue asparagine 284 is glycosylated (N-linked (GlcNAc...) asparagine). Cysteine 331 and cysteine 368 are joined by a disulfide. The chain crosses the membrane as a helical span at residues 374-394; sequence VVLPVVGIIVVVLCVVGLGIY. Residues 395–408 are Cytoplasmic-facing; it reads KIRQRRQSSAYQRI.

Belongs to the LAMP family. As to quaternary structure, monomer. Interacts with FURIN.

Its subcellular location is the cell surface. It localises to the lysosome membrane. The protein resides in the cytoplasmic vesicle membrane. It is found in the early endosome membrane. Functionally, lysosomal membrane glycoprotein which plays a role in the unfolded protein response (UPR) that contributes to protein degradation and cell survival during proteasomal dysfunction. Plays a role in the process of fusion of the lysosome with the autophagosome, thereby modulating the autophagic process. Promotes hepatocellular lipogenesis through activation of the PI3K/Akt pathway. May also play a role in dendritic cell function and in adaptive immunity. The protein is Lysosome-associated membrane glycoprotein 3 (Lamp3) of Rattus norvegicus (Rat).